A 170-amino-acid polypeptide reads, in one-letter code: dCTP pyrophosphatase 1 (170 aa).

The disordered stretch occupies residues 1–27 (MSVAGGEIRGDTGGEDTAAPGRFSFSP). S2 carries the N-acetylserine modification. The residue at position 2 (S2) is a Phosphoserine. T12 is modified (phosphothreonine). Substrate-binding positions include H38 and 47-51 (WEQFH). E63 and E66 together coordinate Mg(2+). Substrate is bound at residue W73. S85 is subject to Phosphoserine. Positions 95 and 98 each coordinate Mg(2+). Y102 is a substrate binding site. Residues 147–170 (GAISEDQAVGPADIPCDSTGQTST) are disordered.

As to quaternary structure, homotetramer. Requires Mg(2+) as cofactor.

The protein resides in the mitochondrion. It is found in the nucleus. It localises to the cytoplasm. Its subcellular location is the cytosol. It carries out the reaction dCTP + H2O = dCMP + diphosphate + H(+). Its activity is regulated as follows. Inhibited by the reaction end product PPi. Inhibited by dCDP. Inhibited by triptolide. Hydrolyzes deoxynucleoside triphosphates (dNTPs) to the corresponding nucleoside monophosphates. Has a strong preference for dCTP and its analogs including 5-iodo-dCTP and 5-methyl-dCTP for which it may even have a higher efficiency. May protect DNA or RNA against the incorporation of these genotoxic nucleotide analogs through their catabolism. This chain is dCTP pyrophosphatase 1, found in Homo sapiens (Human).